Here is a 199-residue protein sequence, read N- to C-terminus: Golgi to ER traffic protein 1 (199 aa).

The Lumenal segment spans residues Met1 to Ile11. A helical transmembrane segment spans residues Leu12–Ser31. Residues Thr32–Ile115 are Cytoplasmic-facing. Residues Tyr76 to Leu116 are a coiled coil. The helical transmembrane segment at Leu116–Phe136 threads the bilayer. The Lumenal portion of the chain corresponds to Tyr137–Ala160. The chain crosses the membrane as a helical span at residues Val161 to Phe177. Topologically, residues Ser178–Glu199 are cytoplasmic.

This sequence belongs to the WRB/GET1 family. In terms of assembly, component of the Golgi to ER traffic (GET) complex, which is composed of GET1, GET2 and GET3. Within the complex, GET1 and GET2 form a heterotetramer which is stabilized by phosphatidylinositol binding and which binds to the GET3 homodimer.

The protein resides in the endoplasmic reticulum membrane. It localises to the golgi apparatus membrane. Functionally, required for the post-translational delivery of tail-anchored (TA) proteins to the endoplasmic reticulum. Together with GET2, acts as a membrane receptor for soluble GET3, which recognizes and selectively binds the transmembrane domain of TA proteins in the cytosol. The GET complex cooperates with the HDEL receptor ERD2 to mediate the ATP-dependent retrieval of resident ER proteins that contain a C-terminal H-D-E-L retention signal from the Golgi to the ER. This is Golgi to ER traffic protein 1 from Candida albicans (strain SC5314 / ATCC MYA-2876) (Yeast).